We begin with the raw amino-acid sequence, 846 residues long: Exonuclease 1 (846 aa).

The segment at 1-99 (MGIQGLLQFI…RSRRERRQAN (99 aa)) is N-domain. Mg(2+)-binding residues include Asp-30, Asp-78, Glu-150, Asp-152, Asp-171, Asp-173, Asp-225, and Asp-270. The segment at 129–387 (MAHKVIKAAR…RPESGTVSDA (259 aa)) is interaction with MSH3. Positions 138–229 (RSQGVDCLVA…ILSGCDYLSS (92 aa)) are I-domain. Residues 372–396 (HRNYSPRPESGTVSDAPQLKENPST) are disordered. A Phosphoserine modification is found at Ser-376. Over residues 382–396 (GTVSDAPQLKENPST) the composition is skewed to polar residues. Residues 388–490 (PQLKENPSTV…NKFATFLQRK (103 aa)) are interaction with MLH1. The short motif at 418–421 (KRPR) is the Nuclear localization signal element. Residues Ser-422 and Ser-454 each carry the phosphoserine modification. Lys-482 carries the N6-acetyllysine modification. Position 581 is a phosphothreonine (Thr-581). A phosphoserine mark is found at Ser-598 and Ser-610. Positions 600 to 846 (PTLGTLRSCF…CGRVQRAIFQ (247 aa)) are interaction with MSH2. A disordered region spans residues 618-781 (FSRTPSPSPS…SIQKRKHHNA (164 aa)). Polar residues-rich tracts occupy residues 620–631 (RTPSPSPSTALQ) and 639–654 (SPTSLPENNMSDVSQL). Residue Thr-621 is modified to Phosphothreonine. 4 positions are modified to phosphoserine: Ser-623, Ser-639, Ser-660, and Ser-674. Residues 655–671 (KSEESSDDESHPLREEA) are compositionally biased toward basic and acidic residues. 3 stretches are compositionally biased toward polar residues: residues 672 to 689 (CSSQSQESGEFSLQSSNA), 713 to 722 (DSQSDQTSKL), and 743 to 754 (KSSSADSLSTTK). Position 714 is a phosphoserine; by ATR (Ser-714). Ser-746 carries the phosphoserine modification. The tract at residues 787–846 (LQIKLNELWKNFGFKKDSEKLPPCKKPLSPVRDNIQLTPEAEEDIFNKPECGRVQRAIFQ) is interaction with MLH1.

This sequence belongs to the XPG/RAD2 endonuclease family. EXO1 subfamily. As to quaternary structure, interacts with the MLH1-PMS2 heterodimer via MLH1. Interacts with MSH3. Interacts with the MSH2-MSH6 heterodimer via MSH2, and this interaction may increase the processivity of the 5'-&gt;3' exonuclease activity. Interacts with PCNA, and this interaction may both stimulate the cryptic 3'-&gt;5' exonuclease activity and suppress the 5'-&gt;3' exonuclease activity. Interacts with WRN, and this interaction stimulates both the 5'-&gt;3' exonuclease activity and cleavage of 5'-overhanging flap structures. Interacts with RECQL/RECQ1, and this interaction stimulates cleavage of 5'-overhanging flap structures. Interacts with DNA helicase ZGRF1; the interaction is increased following DNA damage induction. Mg(2+) is required as a cofactor. Post-translationally, phosphorylated upon DNA damage and in response to agents stalling DNA replication, probably by ATM or ATR. Phosphorylation at Ser-454, Thr-621 and Ser-714 is induced upon DNA-damage caused by treatment with hydroxyurea (HU) but not upon IR treatment. The HU-induced EXO1 triple phosphorylation facilitates destabilization/degradation of the protein. In terms of tissue distribution, highly expressed in bone marrow, testis and thymus. Expressed at lower levels in colon, lymph nodes, ovary, placenta, prostate, small intestine, spleen and stomach.

It is found in the nucleus. In terms of biological role, 5'-&gt;3' double-stranded DNA exonuclease which may also possess a cryptic 3'-&gt;5' double-stranded DNA exonuclease activity. Functions in DNA mismatch repair (MMR) to excise mismatch-containing DNA tracts directed by strand breaks located either 5' or 3' to the mismatch. Also exhibits endonuclease activity against 5'-overhanging flap structures similar to those generated by displacement synthesis when DNA polymerase encounters the 5'-end of a downstream Okazaki fragment. Required for somatic hypermutation (SHM) and class switch recombination (CSR) of immunoglobulin genes. Essential for male and female meiosis. This chain is Exonuclease 1 (EXO1), found in Homo sapiens (Human).